Reading from the N-terminus, the 209-residue chain is Mitotic spindle checkpoint protein MAD2 (209 aa).

In terms of domain architecture, HORMA spans 15–198 (HGSAAIVSEF…TKIHKVDTLV (184 aa)).

Belongs to the MAD2 family. Part of the mitotic checkpoint complex (MCC); interacts with MAD1, CDC20-1, CDC20-2 and CDC20-5. Interacts with BUBR1 at chromocenters and with BUB3.1. Interacts with EIF4B3. Expressed in actively dividing tissues, early in organ development, in young leaves, lateral root primordia and root meristems.

It is found in the nucleus. It localises to the nucleus envelope. The protein resides in the chromosome. Its subcellular location is the centromere. The protein localises to the kinetochore. It is found in the cytoplasm. It localises to the cytoskeleton. The protein resides in the spindle. In terms of biological role, required for the execution of the mitotic checkpoint which monitors the process of kinetochore-spindle attachment and delays the onset of anaphase when this process is not complete. It inhibits the activity of the anaphase promoting complex by sequestering CDC20 until all chromosomes are aligned at the metaphase plate. The polypeptide is Mitotic spindle checkpoint protein MAD2 (Arabidopsis thaliana (Mouse-ear cress)).